The sequence spans 453 residues: Ezy-1 protein (453 aa).

Positions 1-28 are cleaved as a signal peptide; it reads MQLSNSLRSARSAAASSGCALASRPVVA. Disordered regions lie at residues 167 to 187, 272 to 307, and 412 to 453; these read SDGG…DADG, TGKA…SSGG, and SAGD…SPNM. Positions 279–300 are enriched in acidic residues; sequence AEGDDGEGEEEGEAQDVGEDAV. The span at 415-425 shows a compositional bias: basic and acidic residues; it reads DGHEPEPKRPE.

This chain is Ezy-1 protein (Ezy-1), found in Chlamydomonas reinhardtii (Chlamydomonas smithii).